The sequence spans 571 residues: Proline--tRNA ligase (571 aa).

Belongs to the class-II aminoacyl-tRNA synthetase family. ProS type 1 subfamily. Homodimer.

Its subcellular location is the cytoplasm. The enzyme catalyses tRNA(Pro) + L-proline + ATP = L-prolyl-tRNA(Pro) + AMP + diphosphate. Its function is as follows. Catalyzes the attachment of proline to tRNA(Pro) in a two-step reaction: proline is first activated by ATP to form Pro-AMP and then transferred to the acceptor end of tRNA(Pro). As ProRS can inadvertently accommodate and process non-cognate amino acids such as alanine and cysteine, to avoid such errors it has two additional distinct editing activities against alanine. One activity is designated as 'pretransfer' editing and involves the tRNA(Pro)-independent hydrolysis of activated Ala-AMP. The other activity is designated 'posttransfer' editing and involves deacylation of mischarged Ala-tRNA(Pro). The misacylated Cys-tRNA(Pro) is not edited by ProRS. The polypeptide is Proline--tRNA ligase (Shewanella baltica (strain OS185)).